Consider the following 406-residue polypeptide: Serine/threonine transporter SstT (406 aa).

Helical transmembrane passes span 15 to 35, 47 to 67, 81 to 101, 140 to 160, 191 to 211, 215 to 235, 289 to 309, 315 to 335, and 362 to 382; these read LVIQILVGIILGISLALVSPS, FVGALKAIAPILVFILVAASI, IIVMYLAGTFFAALTAVVLSF, ALMSANYIGILAWGVGLGLAL, FGIFGLVASTFATTGFDALAG, LLVVLLSAMAIIALIVNPAMV, IPLGATINMAGAAITITTLTL, MGIEVDLMTALLLSVVAAVSA, and IAMQVVAVGFIIGVIQDSAET.

Belongs to the dicarboxylate/amino acid:cation symporter (DAACS) (TC 2.A.23) family.

It localises to the cell inner membrane. It carries out the reaction L-serine(in) + Na(+)(in) = L-serine(out) + Na(+)(out). It catalyses the reaction L-threonine(in) + Na(+)(in) = L-threonine(out) + Na(+)(out). Functionally, involved in the import of serine and threonine into the cell, with the concomitant import of sodium (symport system). The protein is Serine/threonine transporter SstT of Vibrio vulnificus (strain YJ016).